A 304-amino-acid chain; its full sequence is Recombination-associated protein RdgC (304 aa).

Belongs to the RdgC family.

It localises to the cytoplasm. Its subcellular location is the nucleoid. Its function is as follows. May be involved in recombination. This chain is Recombination-associated protein RdgC, found in Shewanella sp. (strain W3-18-1).